A 230-amino-acid polypeptide reads, in one-letter code: NAD(P)H-quinone oxidoreductase subunit K, chloroplastic (230 aa).

Residues Cys43, Cys44, Cys108, and Cys139 each contribute to the [4Fe-4S] cluster site.

It belongs to the complex I 20 kDa subunit family. As to quaternary structure, NDH is composed of at least 16 different subunits, 5 of which are encoded in the nucleus. [4Fe-4S] cluster serves as cofactor.

The protein localises to the plastid. It localises to the chloroplast thylakoid membrane. It catalyses the reaction a plastoquinone + NADH + (n+1) H(+)(in) = a plastoquinol + NAD(+) + n H(+)(out). The catalysed reaction is a plastoquinone + NADPH + (n+1) H(+)(in) = a plastoquinol + NADP(+) + n H(+)(out). Functionally, NDH shuttles electrons from NAD(P)H:plastoquinone, via FMN and iron-sulfur (Fe-S) centers, to quinones in the photosynthetic chain and possibly in a chloroplast respiratory chain. The immediate electron acceptor for the enzyme in this species is believed to be plastoquinone. Couples the redox reaction to proton translocation, and thus conserves the redox energy in a proton gradient. The polypeptide is NAD(P)H-quinone oxidoreductase subunit K, chloroplastic (Lotus japonicus (Lotus corniculatus var. japonicus)).